Consider the following 485-residue polypeptide: Zinc finger protein 639 (485 aa).

Over residues 1–14 (MNEYPKKRKRKTLH) the composition is skewed to basic residues. Disordered stretches follow at residues 1 to 23 (MNEY…DSSG) and 54 to 80 (DNKD…ARNR). Ser60 is modified (phosphoserine). Residue Lys76 forms a Glycyl lysine isopeptide (Lys-Gly) (interchain with G-Cter in SUMO2) linkage. A Phosphoserine modification is found at Ser88. A disordered region spans residues 115-136 (ASPESVHQHTQEESPIEVHTSE). Residues Lys177, Lys181, and Lys226 each participate in a glycyl lysine isopeptide (Lys-Gly) (interchain with G-Cter in SUMO2) cross-link. C2H2-type zinc fingers lie at residues 204-227 (YKCE…ILKH), 233-255 (NVCR…AKLH), 260-283 (YICK…ADTH), 289-311 (YWCE…FQEH), 374-397 (FVCQ…AIEH), 403-425 (HVCD…LNSH), 431-454 (YLCQ…DFKH), and 460-482 (HKCS…LQVH). Residues 371–455 (KNFFVCQVCG…LKIHLDFKHS (85 aa)) are interaction with CTNNA2.

The protein belongs to the krueppel C2H2-type zinc-finger protein family. As to quaternary structure, interacts with CTNNA2.

Its subcellular location is the nucleus. Binds DNA and may function as a transcriptional repressor. The protein is Zinc finger protein 639 (Znf639) of Mus musculus (Mouse).